Here is a 291-residue protein sequence, read N- to C-terminus: ATP synthase gamma chain (291 aa).

It belongs to the ATPase gamma chain family. F-type ATPases have 2 components, CF(1) - the catalytic core - and CF(0) - the membrane proton channel. CF(1) has five subunits: alpha(3), beta(3), gamma(1), delta(1), epsilon(1). CF(0) has three main subunits: a, b and c.

Its subcellular location is the cell inner membrane. Its function is as follows. Produces ATP from ADP in the presence of a proton gradient across the membrane. The gamma chain is believed to be important in regulating ATPase activity and the flow of protons through the CF(0) complex. This Ruegeria pomeroyi (strain ATCC 700808 / DSM 15171 / DSS-3) (Silicibacter pomeroyi) protein is ATP synthase gamma chain.